The following is a 462-amino-acid chain: Serine--tRNA ligase, cytoplasmic (462 aa).

L-serine is bound at residue 246–248; the sequence is TSE. Residues 279–281 and Val295 each bind ATP; that span reads RRE. Glu302 contacts L-serine. Position 366–369 (366–369) interacts with ATP; that stretch reads ELVS. Thr404 contacts L-serine.

It belongs to the class-II aminoacyl-tRNA synthetase family. Type-1 seryl-tRNA synthetase subfamily. In terms of assembly, homodimer. The tRNA molecule binds across the dimer.

The protein resides in the cytoplasm. It localises to the cytosol. The catalysed reaction is tRNA(Ser) + L-serine + ATP = L-seryl-tRNA(Ser) + AMP + diphosphate + H(+). In terms of biological role, catalyzes the attachment of serine to tRNA(Ser) in a two-step reaction: serine is first activated by ATP to form Ser-AMP and then transferred to the acceptor end of tRNA(Ser). This chain is Serine--tRNA ligase, cytoplasmic (SES1), found in Candida albicans (strain SC5314 / ATCC MYA-2876) (Yeast).